Consider the following 278-residue polypeptide: Small ribosomal subunit protein uS2 (278 aa).

A disordered region spans residues 233 to 257 (IDMEAAGEAPANKGKKKSVKARLDK).

This sequence belongs to the universal ribosomal protein uS2 family.

The protein is Small ribosomal subunit protein uS2 of Bacteroides thetaiotaomicron (strain ATCC 29148 / DSM 2079 / JCM 5827 / CCUG 10774 / NCTC 10582 / VPI-5482 / E50).